The sequence spans 109 residues: Probable guanidinium efflux system subunit GdnC (109 aa).

Helical transmembrane passes span 3 to 23 (WGSV…LKHA), 26 to 46 (ALEW…LVKA), 55 to 75 (VYAV…IALF), and 81 to 101 (IAKL…KLVT).

It belongs to the drug/metabolite transporter (DMT) superfamily. Small multidrug resistance (SMR) (TC 2.A.7.1) family. YkkC/YkkD subfamily. As to quaternary structure, the efflux pump is composed of GdnC and GdnD.

The protein localises to the cell membrane. Its function is as follows. Probably involved in guanidinium transport. In Bacillus licheniformis (strain ATCC 14580 / DSM 13 / JCM 2505 / CCUG 7422 / NBRC 12200 / NCIMB 9375 / NCTC 10341 / NRRL NRS-1264 / Gibson 46), this protein is Probable guanidinium efflux system subunit GdnC.